The primary structure comprises 806 residues: Transitional endoplasmic reticulum ATPase (806 aa).

Position 2 is an N-acetylalanine (Ala2). Phosphoserine occurs at positions 3 and 7. Residue Lys8 forms a Glycyl lysine isopeptide (Lys-Gly) (interchain with G-Cter in SUMO2) linkage. Residue Ser13 is modified to Phosphoserine. A Glycyl lysine isopeptide (Lys-Gly) (interchain with G-Cter in SUMO2) cross-link involves residue Lys18. Ser37 is modified (phosphoserine). 247–253 (PGTGKTL) lines the ATP pocket. At Lys315 the chain carries N6,N6,N6-trimethyllysine; by VCPKMT. 2 residues coordinate ATP: Asn348 and His384. Thr436 carries the phosphothreonine modification. Phosphoserine is present on Ser462. N6-acetyllysine is present on residues Lys502 and Lys505. 521–526 (GCGKTL) is an ATP binding site. Lys668 is modified (N6-acetyllysine; alternate). N6-succinyllysine; alternate is present on Lys668. A Phosphoserine modification is found at Ser702. Residues 708-727 (RRERERQTNPSAMEVEEDDP) are disordered. Lys754 carries the post-translational modification N6-acetyllysine. Positions 768–806 (FGSFRFPSGNQGGAGPSQGSGGGTGGNVYTEDNDDDLYG) are disordered. A phosphoserine mark is found at Ser770, Ser775, and Ser787. The segment covering 777 to 793 (NQGGAGPSQGSGGGTGG) has biased composition (gly residues). The interval 797–806 (TEDNDDDLYG) is interaction with UBXN6. The short motif at 802–806 (DDLYG) is the PIM motif element. Phosphotyrosine is present on Tyr805.

Belongs to the AAA ATPase family. As to quaternary structure, homohexamer. Forms a ring-shaped particle of 12.5 nm diameter, that displays 6-fold radial symmetry. Part of a ternary complex containing STX5A, NSFL1C and VCP. NSFL1C forms a homotrimer that binds to one end of a VCP homohexamer. The complex binds to membranes enriched in phosphatidylethanolamine-containing lipids and promotes Golgi membrane fusion. Binds to a heterodimer of NPLOC4 and UFD1, binding to this heterodimer inhibits Golgi-membrane fusion. Interaction with VCIP135 leads to dissociation of the complex via ATP hydrolysis by VCP. Part of a ternary complex containing NPLOC4, UFD1 and VCP. Interacts with NSFL1C-like protein p37; the complex has membrane fusion activity and is required for Golgi and endoplasmic reticulum biogenesis. Interacts with SELENOS and SYVN1, as well as with DERL1 (via SHP-box motif), DERL2 and DERL3; which probably transfer misfolded proteins from the ER to VCP. Interacts with SVIP and DERL1. Component of a complex required to couple retrotranslocation, ubiquitination and deglycosylation composed of NGLY1, SAKS1, AMFR, VCP and RAD23B. Part of a complex composed of STUB1/CHIP, VCP/p97, CHRNA3, and UBXN2A that modulates the ubiquitination and endoplasmic reticulum-associated degradation (ERAD) of CHRNA3. Within the complex UBXN2A acts as a scaffold protein required for the interaction of CHRNA3 with VCP/p97, this interaction also inhibits CHRNA3 ubiquitination by STUB1/CHIP and subsequently ERAD. Interacts with UBXN2A (via UBX domain); the interaction is required for the interaction of CHRNA3 in the STUB1-VCP-UBXN2A complex. Directly interacts with UBXN4 and RNF19A. Interacts with CASR. Interacts with UBE4B and YOD1. Interacts with clathrin. Interacts with RNF103. Interacts with TRIM13 and TRIM21. Component of a VCP/p97-AMFR/gp78 complex that participates in the final step of the endoplasmic reticulum-associated degradation (ERAD) of HMGCR. Interacts directly with AMFR/gp78 (via its VIM). Interacts with RHBDD1 (via C-terminal domain). Interacts with SPRTN; leading to recruitment to stalled replication forks. Interacts with WASHC5. Interacts with UBOX5. Interacts (via N-terminus) with UBXN7, UBXN8, and probably several other UBX domain-containing proteins (via UBX domains); the interactions are mutually exclusive with VIM-dependent interactions such as those with AMFR and SELENOS. Forms a complex with UBQLN1 and UBXN4. Interacts (via the PIM motif) with RNF31 (via the PUB domain). Interacts with RIGI and RNF125; interaction takes place when RIGI is ubiquitinated via 'Lys-63'-linked ubiquitin on its CARD domains, leading to recruit RNF125 and promote ubiquitination and degradation of RIGI. Interacts with BAG6. Interacts with UBXN10. Interacts with UBXN6; the interaction with UBXN6 is direct and competitive with UFD1. Forms a ternary complex with CAV1 and UBXN6. Interacts with PLAA, UBXN6 and YOD1; may form a complex involved in macroautophagy. Interacts with ANKZF1. Interacts with ubiquitin-binding protein FAF1. Interacts with ZFAND2B (via VIM motif); the interaction is direct. Interacts with ZFAND1 (via its ubiquitin-like region); this interaction occurs in an arsenite-dependent manner. Interacts with CCDC47. Interacts with LMBR1L and UBAC2. Interacts with ATXN3. Interacts with TEX264; bridging VCP to covalent DNA-protein cross-links (DPCs). In terms of processing, ISGylated. Methylation at Lys-315 catalyzed by VCPKMT is increased in the presence of ASPSCR1. Lys-315 methylation may decrease ATPase activity. Post-translationally, phosphorylated by tyrosine kinases in response to T-cell antigen receptor activation. Phosphorylated in mitotic cells.

It localises to the cytoplasm. It is found in the cytosol. The protein resides in the endoplasmic reticulum. Its subcellular location is the nucleus. The protein localises to the stress granule. It catalyses the reaction ATP + H2O = ADP + phosphate + H(+). In terms of biological role, necessary for the fragmentation of Golgi stacks during mitosis and for their reassembly after mitosis. Involved in the formation of the transitional endoplasmic reticulum (tER). The transfer of membranes from the endoplasmic reticulum to the Golgi apparatus occurs via 50-70 nm transition vesicles which derive from part-rough, part-smooth transitional elements of the endoplasmic reticulum (tER). Vesicle budding from the tER is an ATP-dependent process. The ternary complex containing UFD1, VCP and NPLOC4 binds ubiquitinated proteins and is necessary for the export of misfolded proteins from the ER to the cytoplasm, where they are degraded by the proteasome. The NPLOC4-UFD1-VCP complex regulates spindle disassembly at the end of mitosis and is necessary for the formation of a closed nuclear envelope. Regulates E3 ubiquitin-protein ligase activity of RNF19A. Component of the VCP/p97-AMFR/gp78 complex that participates in the final step of the sterol-mediated ubiquitination and endoplasmic reticulum-associated degradation (ERAD) of HMGCR. Mediates the endoplasmic reticulum-associated degradation of CHRNA3 in cortical neurons as part of the STUB1-VCP-UBXN2A complex. Involved in endoplasmic reticulum stress-induced pre-emptive quality control, a mechanism that selectively attenuates the translocation of newly synthesized proteins into the endoplasmic reticulum and reroutes them to the cytosol for proteasomal degradation. Involved in clearance process by mediating G3BP1 extraction from stress granules. Also involved in DNA damage response: recruited to double-strand breaks (DSBs) sites in a RNF8- and RNF168-dependent manner and promotes the recruitment of TP53BP1 at DNA damage sites. Recruited to stalled replication forks by SPRTN: may act by mediating extraction of DNA polymerase eta (POLH) to prevent excessive translesion DNA synthesis and limit the incidence of mutations induced by DNA damage. Together with SPRTN metalloprotease, involved in the repair of covalent DNA-protein cross-links (DPCs) during DNA synthesis. Involved in interstrand cross-link repair in response to replication stress by mediating unloading of the ubiquitinated CMG helicase complex. Mediates extraction of PARP1 trapped to chromatin: recognizes and binds ubiquitinated PARP1 and promotes its removal. Required for cytoplasmic retrotranslocation of stressed/damaged mitochondrial outer-membrane proteins and their subsequent proteasomal degradation. Essential for the maturation of ubiquitin-containing autophagosomes and the clearance of ubiquitinated protein by autophagy. Acts as a negative regulator of type I interferon production by interacting with RIGI: interaction takes place when RIGI is ubiquitinated via 'Lys-63'-linked ubiquitin on its CARD domains, leading to recruit RNF125 and promote ubiquitination and degradation of RIGI. May play a role in the ubiquitin-dependent sorting of membrane proteins to lysosomes where they undergo degradation. May more particularly play a role in caveolins sorting in cells. By controlling the steady-state expression of the IGF1R receptor, indirectly regulates the insulin-like growth factor receptor signaling pathway. The protein is Transitional endoplasmic reticulum ATPase (VCP) of Bos taurus (Bovine).